We begin with the raw amino-acid sequence, 316 residues long: 2,3-dihydroxyphenylpropionate/2,3-dihydroxicinnamic acid 1,2-dioxygenase (316 aa).

The Proton donor role is filled by H115. H180 (proton acceptor) is an active-site residue.

This sequence belongs to the LigB/MhpB extradiol dioxygenase family. In terms of assembly, homotetramer. The cofactor is Fe(2+).

The enzyme catalyses 3-(2,3-dihydroxyphenyl)propanoate + O2 = (2Z,4E)-2-hydroxy-6-oxonona-2,4-dienedioate + H(+). It carries out the reaction (2E)-3-(2,3-dihydroxyphenyl)prop-2-enoate + O2 = (2Z,4E,7E)-2-hydroxy-6-oxonona-2,4,7-trienedioate + H(+). It functions in the pathway aromatic compound metabolism; 3-phenylpropanoate degradation. Its function is as follows. Catalyzes the non-heme iron(II)-dependent oxidative cleavage of 2,3-dihydroxyphenylpropionic acid and 2,3-dihydroxicinnamic acid into 2-hydroxy-6-ketononadienedioate and 2-hydroxy-6-ketononatrienedioate, respectively. The chain is 2,3-dihydroxyphenylpropionate/2,3-dihydroxicinnamic acid 1,2-dioxygenase from Rhodococcus rhodochrous.